We begin with the raw amino-acid sequence, 135 residues long: UPF0299 membrane protein YE2790 (135 aa).

The next 4 membrane-spanning stretches (helical) occupy residues 4-24, 30-50, 63-83, and 93-113; these read VTSL…CLWA, LLLP…FALL, GCHL…VGVM, and FGPI…VVGY.

Belongs to the UPF0299 family.

The protein localises to the cell inner membrane. This is UPF0299 membrane protein YE2790 from Yersinia enterocolitica serotype O:8 / biotype 1B (strain NCTC 13174 / 8081).